The primary structure comprises 78 residues: Large ribosomal subunit protein uL29 (78 aa).

Residues 59-78 (VESERKRGKSLSSTQTQKEE) form a disordered region. The span at 68-78 (SLSSTQTQKEE) shows a compositional bias: polar residues.

This sequence belongs to the universal ribosomal protein uL29 family.

This Synechococcus sp. (strain JA-3-3Ab) (Cyanobacteria bacterium Yellowstone A-Prime) protein is Large ribosomal subunit protein uL29.